We begin with the raw amino-acid sequence, 391 residues long: Bifunctional enzyme IspD/IspF (391 aa).

Residues 1-230 (MLAAGRGKRA…KKKMQMFPDI (230 aa)) form a 2-C-methyl-D-erythritol 4-phosphate cytidylyltransferase region. Residues 231–391 (RTGNGYDVHS…TVLYPGEIPK (161 aa)) are 2-C-methyl-D-erythritol 2,4-cyclodiphosphate synthase. A divalent metal cation is bound by residues aspartate 237 and histidine 239. 4-CDP-2-C-methyl-D-erythritol 2-phosphate contacts are provided by residues 237–239 (DVH) and 263–264 (HS). Position 271 (histidine 271) interacts with a divalent metal cation. 4-CDP-2-C-methyl-D-erythritol 2-phosphate-binding positions include 285–287 (DIG), 361–364 (TTNE), phenylalanine 368, and arginine 371.

This sequence in the N-terminal section; belongs to the IspD/TarI cytidylyltransferase family. IspD subfamily. In the C-terminal section; belongs to the IspF family. A divalent metal cation is required as a cofactor.

It catalyses the reaction 2-C-methyl-D-erythritol 4-phosphate + CTP + H(+) = 4-CDP-2-C-methyl-D-erythritol + diphosphate. It carries out the reaction 4-CDP-2-C-methyl-D-erythritol 2-phosphate = 2-C-methyl-D-erythritol 2,4-cyclic diphosphate + CMP. The protein operates within isoprenoid biosynthesis; isopentenyl diphosphate biosynthesis via DXP pathway; isopentenyl diphosphate from 1-deoxy-D-xylulose 5-phosphate: step 2/6. It participates in isoprenoid biosynthesis; isopentenyl diphosphate biosynthesis via DXP pathway; isopentenyl diphosphate from 1-deoxy-D-xylulose 5-phosphate: step 4/6. Functionally, bifunctional enzyme that catalyzes the formation of 4-diphosphocytidyl-2-C-methyl-D-erythritol from CTP and 2-C-methyl-D-erythritol 4-phosphate (MEP) (IspD), and catalyzes the conversion of 4-diphosphocytidyl-2-C-methyl-D-erythritol 2-phosphate (CDP-ME2P) to 2-C-methyl-D-erythritol 2,4-cyclodiphosphate (ME-CPP) with a corresponding release of cytidine 5-monophosphate (CMP) (IspF). The chain is Bifunctional enzyme IspD/IspF from Bartonella quintana (strain Toulouse) (Rochalimaea quintana).